The primary structure comprises 132 residues: MSGSLAFHIIMSVTFMVFFFGGLCEARGVNVDLINDIGPNVQLGLHCKSKNKDLGSQSLVSDQHWGFRASLGFWTVTLFFCHFEWENQSKWFDIFVEDRDLTCGDHCVWSIRPSGPCRLTGREKCFPWNNKY.

The N-terminal stretch at 1–26 (MSGSLAFHIIMSVTFMVFFFGGLCEA) is a signal peptide. An N-linked (GlcNAc...) asparagine glycan is attached at Asn87.

This sequence belongs to the plant self-incompatibility (S1) protein family.

It localises to the secreted. In Arabidopsis thaliana (Mouse-ear cress), this protein is S-protein homolog 19.